A 308-amino-acid polypeptide reads, in one-letter code: 1D-myo-inositol 2-acetamido-2-deoxy-alpha-D-glucopyranoside deacetylase (308 aa).

Histidine 37, aspartate 40, and histidine 171 together coordinate Zn(2+).

The protein belongs to the MshB deacetylase family. It depends on Zn(2+) as a cofactor.

It catalyses the reaction 1D-myo-inositol 2-acetamido-2-deoxy-alpha-D-glucopyranoside + H2O = 1D-myo-inositol 2-amino-2-deoxy-alpha-D-glucopyranoside + acetate. Its function is as follows. Catalyzes the deacetylation of 1D-myo-inositol 2-acetamido-2-deoxy-alpha-D-glucopyranoside (GlcNAc-Ins) in the mycothiol biosynthesis pathway. The sequence is that of 1D-myo-inositol 2-acetamido-2-deoxy-alpha-D-glucopyranoside deacetylase from Mycobacterium sp. (strain KMS).